The primary structure comprises 338 residues: Histidinol-phosphate aminotransferase (338 aa).

Lys-204 carries the post-translational modification N6-(pyridoxal phosphate)lysine.

Belongs to the class-II pyridoxal-phosphate-dependent aminotransferase family. Histidinol-phosphate aminotransferase subfamily. Requires pyridoxal 5'-phosphate as cofactor.

It carries out the reaction L-histidinol phosphate + 2-oxoglutarate = 3-(imidazol-4-yl)-2-oxopropyl phosphate + L-glutamate. It functions in the pathway amino-acid biosynthesis; L-histidine biosynthesis; L-histidine from 5-phospho-alpha-D-ribose 1-diphosphate: step 7/9. This chain is Histidinol-phosphate aminotransferase, found in Pyrococcus furiosus (strain ATCC 43587 / DSM 3638 / JCM 8422 / Vc1).